Reading from the N-terminus, the 407-residue chain is Probable tRNA sulfurtransferase (407 aa).

The 105-residue stretch at 61 to 165 (EEMCNRLKKV…LDAIYMYDQV (105 aa)) folds into the THUMP domain. ATP contacts are provided by residues 183–184 (ML), 208–209 (HF), Arg-265, Gly-287, and Gln-296.

It belongs to the ThiI family.

Its subcellular location is the cytoplasm. It catalyses the reaction [ThiI sulfur-carrier protein]-S-sulfanyl-L-cysteine + a uridine in tRNA + 2 reduced [2Fe-2S]-[ferredoxin] + ATP + H(+) = [ThiI sulfur-carrier protein]-L-cysteine + a 4-thiouridine in tRNA + 2 oxidized [2Fe-2S]-[ferredoxin] + AMP + diphosphate. The enzyme catalyses [ThiS sulfur-carrier protein]-C-terminal Gly-Gly-AMP + S-sulfanyl-L-cysteinyl-[cysteine desulfurase] + AH2 = [ThiS sulfur-carrier protein]-C-terminal-Gly-aminoethanethioate + L-cysteinyl-[cysteine desulfurase] + A + AMP + 2 H(+). Its pathway is cofactor biosynthesis; thiamine diphosphate biosynthesis. Functionally, catalyzes the ATP-dependent transfer of a sulfur to tRNA to produce 4-thiouridine in position 8 of tRNAs, which functions as a near-UV photosensor. Also catalyzes the transfer of sulfur to the sulfur carrier protein ThiS, forming ThiS-thiocarboxylate. This is a step in the synthesis of thiazole, in the thiamine biosynthesis pathway. The sulfur is donated as persulfide by IscS. This is Probable tRNA sulfurtransferase from Staphylococcus saprophyticus subsp. saprophyticus (strain ATCC 15305 / DSM 20229 / NCIMB 8711 / NCTC 7292 / S-41).